The following is an 839-amino-acid chain: Enhancer of polycomb-like protein 1 (839 aa).

Disordered regions lie at residues 350-379 (QKKRKVEPKKEEKAEKASTPVRGGKAAGSA), 393-415 (GSGSPSVSSTHVPPNVSIPPSKI), 608-640 (LADRQKYDRETEPTRQMSSYDKDPSQLNGISSD), and 679-839 (QQQQ…KVDA). Residues 608-620 (LADRQKYDRETEP) show a composition bias toward basic and acidic residues. A compositionally biased stretch (polar residues) spans 621 to 640 (TRQMSSYDKDPSQLNGISSD). A compositionally biased stretch (low complexity) spans 679–690 (QQQQQQMRNRQQ). Residues 697 to 713 (PGAGLGGGQGAGGGAGG) show a composition bias toward gly residues. Residues 714-730 (SRNNSPAPGTNGPQSKM) show a composition bias toward polar residues. The span at 747 to 786 (QHQQYQQMQQQQQQQQQQQQQRKMGVAPMNAASAAAAMAA) shows a compositional bias: low complexity. Residues 828-839 (MKQKSELAKVDA) show a composition bias toward basic and acidic residues.

This sequence belongs to the enhancer of polycomb family. In terms of assembly, component of the NuA4 histone acetyltransferase complex.

Its subcellular location is the nucleus. In terms of biological role, component of the NuA4 histone acetyltransferase complex which is involved in transcriptional activation of selected genes principally by acetylation of nucleosomal histone H4 and H2A. The NuA4 complex is also involved in DNA repair. Involved in gene silencing by neighboring heterochromatin, blockage of the silencing spreading along the chromosome, and required for cell cycle progression through G2/M. This Yarrowia lipolytica (strain CLIB 122 / E 150) (Yeast) protein is Enhancer of polycomb-like protein 1 (EPL1).